The sequence spans 191 residues: 3-isopropylmalate dehydratase small subunit (191 aa).

It belongs to the LeuD family. LeuD type 1 subfamily. As to quaternary structure, heterodimer of LeuC and LeuD.

It carries out the reaction (2R,3S)-3-isopropylmalate = (2S)-2-isopropylmalate. The protein operates within amino-acid biosynthesis; L-leucine biosynthesis; L-leucine from 3-methyl-2-oxobutanoate: step 2/4. In terms of biological role, catalyzes the isomerization between 2-isopropylmalate and 3-isopropylmalate, via the formation of 2-isopropylmaleate. This Anaeromyxobacter dehalogenans (strain 2CP-1 / ATCC BAA-258) protein is 3-isopropylmalate dehydratase small subunit.